Here is a 115-residue protein sequence, read N- to C-terminus: Ribonuclease P protein component (115 aa).

It belongs to the RnpA family. Consists of a catalytic RNA component (M1 or rnpB) and a protein subunit.

It catalyses the reaction Endonucleolytic cleavage of RNA, removing 5'-extranucleotides from tRNA precursor.. RNaseP catalyzes the removal of the 5'-leader sequence from pre-tRNA to produce the mature 5'-terminus. It can also cleave other RNA substrates such as 4.5S RNA. The protein component plays an auxiliary but essential role in vivo by binding to the 5'-leader sequence and broadening the substrate specificity of the ribozyme. In Baumannia cicadellinicola subsp. Homalodisca coagulata, this protein is Ribonuclease P protein component.